The chain runs to 224 residues: Dehydration-responsive element-binding protein 1G (224 aa).

Polar residues predominate over residues 1–16 (MDVSAALSSDYSSGTP). Residues 1-46 (MDVSAALSSDYSSGTPSPVAADADDGSSAYMTVSSAPPKRRAGRTK) are disordered. Residues 54 to 111 (VFKGVRRRNPGRWVCEVREPHGKQRIWLGTFETAEMAARAHDVAALALRGRAACLNFA) constitute a DNA-binding region (AP2/ERF). Disordered stretches follow at residues 139 to 161 (AFRPPPDESNAATEVAAAASGAT) and 200 to 224 (PPMAGDPAVGSGEDDNDGEVQLWSY).

Belongs to the AP2/ERF transcription factor family. ERF subfamily.

The protein resides in the nucleus. Transcriptional activator that binds specifically to the DNA sequence 5'-[AG]CCGAC-3'. Binding to the C-repeat/DRE element mediates high salinity- and dehydration-inducible transcription. In Oryza sativa subsp. japonica (Rice), this protein is Dehydration-responsive element-binding protein 1G (DREB1G).